The chain runs to 381 residues: Putrescine N-methyltransferase 3 (381 aa).

Residues 21 to 81 (MNGYQNGTSK…TISHDNGNEL (61 aa)) form a disordered region. Polar residues-rich tracts occupy residues 23 to 39 (GYQN…QNGT) and 46 to 81 (HQNG…GNEL). The 238-residue stretch at 92–329 (PGWFSEFSAL…GVIGYMLCST (238 aa)) folds into the PABS domain. Residues glutamine 123, glutamate 198, and 229 to 230 (DG) contribute to the S-adenosyl-L-methionine site. The active-site Proton acceptor is aspartate 248. Tyrosine 317 is an S-adenosyl-L-methionine binding site.

This sequence belongs to the class I-like SAM-binding methyltransferase superfamily. Putrescine methyltransferase family. Predominantly expressed in roots.

It carries out the reaction putrescine + S-adenosyl-L-methionine = N-methylputrescine + S-adenosyl-L-homocysteine + H(+). The protein operates within alkaloid biosynthesis; nicotine biosynthesis. Its function is as follows. Involved in the biosynthesis of pyridine alkaloid natural products, leading mainly to the production of anabasine, anatabine, nicotine and nornicotine, effective deterrents against herbivores with antiparasitic and pesticide properties (neurotoxins); nornicotine serves as the precursor in the synthesis of the carcinogen compound N'-nitrosonornicotine (NNN). Methyltransferase that mediates the conversion of putrescine to N-methylputrescine. Promotes leaves ripening. The protein is Putrescine N-methyltransferase 3 of Nicotiana tabacum (Common tobacco).